Consider the following 471-residue polypeptide: tRNA-2-methylthio-N(6)-dimethylallyladenosine synthase (471 aa).

The MTTase N-terminal domain maps to 31–149 (LYYHIETYGC…FPQLLWEALN (119 aa)). Residues Cys-40, Cys-76, Cys-110, Cys-186, Cys-190, and Cys-193 each coordinate [4Fe-4S] cluster. The 231-residue stretch at 172-402 (RDSNLKAWVN…IELQNKISLE (231 aa)) folds into the Radical SAM core domain. Positions 405 to 468 (AELRGKIVEV…AWTMQGELVE (64 aa)) constitute a TRAM domain.

Belongs to the methylthiotransferase family. MiaB subfamily. Monomer. Requires [4Fe-4S] cluster as cofactor.

Its subcellular location is the cytoplasm. It carries out the reaction N(6)-dimethylallyladenosine(37) in tRNA + (sulfur carrier)-SH + AH2 + 2 S-adenosyl-L-methionine = 2-methylsulfanyl-N(6)-dimethylallyladenosine(37) in tRNA + (sulfur carrier)-H + 5'-deoxyadenosine + L-methionine + A + S-adenosyl-L-homocysteine + 2 H(+). Functionally, catalyzes the methylthiolation of N6-(dimethylallyl)adenosine (i(6)A), leading to the formation of 2-methylthio-N6-(dimethylallyl)adenosine (ms(2)i(6)A) at position 37 in tRNAs that read codons beginning with uridine. This chain is tRNA-2-methylthio-N(6)-dimethylallyladenosine synthase, found in Thermoanaerobacter sp. (strain X514).